Reading from the N-terminus, the 234-residue chain is Large ribosomal subunit protein uL1 (234 aa).

This sequence belongs to the universal ribosomal protein uL1 family. As to quaternary structure, part of the 50S ribosomal subunit.

In terms of biological role, binds directly to 23S rRNA. The L1 stalk is quite mobile in the ribosome, and is involved in E site tRNA release. Its function is as follows. Protein L1 is also a translational repressor protein, it controls the translation of the L11 operon by binding to its mRNA. Peptides originating from the N-terminal end of L1 have antibacterial activity against bacteria such as E.coli and B.megaterium and modest antifungal activities. Has no effect on H.pylori itself. Peptides are not hemolytic against mammalian cells. These peptides may be released in the stomach during altruistic lysis to kill other fast growing bacteria. The polypeptide is Large ribosomal subunit protein uL1 (Helicobacter pylori (strain ATCC 700392 / 26695) (Campylobacter pylori)).